A 273-amino-acid polypeptide reads, in one-letter code: MENRKNYFHLHLISDSTGETLIAAGRAAAAQFQSSHALEHVYPLIRNRKQLMQVMEAVDGAPGIVLYTIVDRELAGLIDQRCREIGVPCVSVLDPIIELFQSYLGSPSRRRSGAQHVMDAEYFARIEALNFTMDHDDGQIPADFDEADVVLVGVSRTSKTPTSIYLANRGIKTANIPIVPGVSLPEGLLTATKPLIVGLIASAERLSQVRQHRVLGTTQSFHGEDYTDRAAIAEELKYARSLCARNNWPLIDVTRRSIEETAAAIVALRPRLR.

153 to 160 (GVSRTSKT) contacts ADP.

It belongs to the pyruvate, phosphate/water dikinase regulatory protein family. PDRP subfamily.

It catalyses the reaction N(tele)-phospho-L-histidyl/L-threonyl-[pyruvate, phosphate dikinase] + ADP = N(tele)-phospho-L-histidyl/O-phospho-L-threonyl-[pyruvate, phosphate dikinase] + AMP + H(+). It carries out the reaction N(tele)-phospho-L-histidyl/O-phospho-L-threonyl-[pyruvate, phosphate dikinase] + phosphate + H(+) = N(tele)-phospho-L-histidyl/L-threonyl-[pyruvate, phosphate dikinase] + diphosphate. Functionally, bifunctional serine/threonine kinase and phosphorylase involved in the regulation of the pyruvate, phosphate dikinase (PPDK) by catalyzing its phosphorylation/dephosphorylation. The chain is Putative pyruvate, phosphate dikinase regulatory protein from Sinorhizobium medicae (strain WSM419) (Ensifer medicae).